The primary structure comprises 126 residues: Hydrogenase maturation factor HypA (126 aa).

Ni(2+) is bound at residue His-2. 4 residues coordinate Zn(2+): Cys-78, Cys-81, Cys-97, and Cys-100.

Belongs to the HypA/HybF family.

Its function is as follows. Involved in the maturation of [NiFe] hydrogenases. Required for nickel insertion into the metal center of the hydrogenase. The chain is Hydrogenase maturation factor HypA from Methanococcus maripaludis (strain DSM 14266 / JCM 13030 / NBRC 101832 / S2 / LL).